The sequence spans 876 residues: Liprin-beta-2 (876 aa).

The stretch at 101-313 forms a coiled coil; it reads AASNETYQER…TGLLNQYRKV (213 aa). Residues Ser329, Ser363, and Ser387 each carry the phosphoserine modification. A disordered region spans residues 356-376; it reads EMPPRCSSPTVGPPPLPQKSL. Disordered regions lie at residues 425-451 and 470-500; these read LPGK…PDAT and VVND…PKGI. Residues 473 to 489 are compositionally biased toward polar residues; it reads DLSSTSSGTESGPQSPL. Ser512 is subject to Phosphoserine. Residues 527–553 form a disordered region; sequence RGGLRATAGPRLSRTRDSKGQKSDANA. SAM domains follow at residues 558–622, 630–693, and 718–783; these read WSTE…INTK, LDHI…LHVN, and WSNH…KFNA.

This sequence belongs to the liprin family. Liprin-beta subfamily. As to quaternary structure, forms homodimers and heterodimers. Widely expressed.

Its function is as follows. May regulate the disassembly of focal adhesions. Did not bind receptor-like tyrosine phosphatases type 2A. This chain is Liprin-beta-2 (PPFIBP2), found in Homo sapiens (Human).